The following is a 207-amino-acid chain: Outer-membrane lipoprotein LolB (207 aa).

An N-terminal signal peptide occupies residues 1 to 21 (MPLPDFRLIRLLPLAALVLTA). Residue Cys22 is the site of N-palmitoyl cysteine attachment. Residue Cys22 is the site of S-diacylglycerol cysteine attachment.

It belongs to the LolB family. As to quaternary structure, monomer.

It is found in the cell outer membrane. In terms of biological role, plays a critical role in the incorporation of lipoproteins in the outer membrane after they are released by the LolA protein. This is Outer-membrane lipoprotein LolB from Shigella dysenteriae serotype 1 (strain Sd197).